Consider the following 237-residue polypeptide: uncharacterized protein (237 aa).

In terms of domain architecture, Response regulatory spans 3–116; sequence RILLVEDDER…VVMAKIKSVL (114 aa). At Asp-52 the chain carries 4-aspartylphosphate. The ompR/PhoB-type DNA-binding region spans 131–229; the sequence is SRIVELGGLT…IRGQGYQFQV (99 aa).

In terms of processing, phosphorylated by YvcQ.

Its subcellular location is the cytoplasm. Its function is as follows. Member of the two-component regulatory system YvcQ/YvcP. This is an uncharacterized protein from Bacillus subtilis (strain 168).